Here is a 49-residue protein sequence, read N- to C-terminus: Large ribosomal subunit protein bL33 (49 aa).

Belongs to the bacterial ribosomal protein bL33 family.

The protein is Large ribosomal subunit protein bL33 of Syntrophotalea carbinolica (strain DSM 2380 / NBRC 103641 / GraBd1) (Pelobacter carbinolicus).